The following is a 91-amino-acid chain: Small ribosomal subunit protein uS19 (91 aa).

This sequence belongs to the universal ribosomal protein uS19 family.

In terms of biological role, protein S19 forms a complex with S13 that binds strongly to the 16S ribosomal RNA. This Mycoplasmopsis pulmonis (strain UAB CTIP) (Mycoplasma pulmonis) protein is Small ribosomal subunit protein uS19 (rpsS).